Consider the following 255-residue polypeptide: tRNA (adenine(58)-N(1))-methyltransferase TrmI (255 aa).

S-adenosyl-L-methionine is bound by residues 104–107 (SGGL), glutamate 125, histidine 130, glutamate 155, and aspartate 170.

The protein belongs to the class I-like SAM-binding methyltransferase superfamily. TRM61 family. In terms of assembly, homotetramer composed of a dimer of dimers.

It carries out the reaction adenosine(58) in tRNA + S-adenosyl-L-methionine = N(1)-methyladenosine(58) in tRNA + S-adenosyl-L-homocysteine + H(+). In terms of biological role, catalyzes the S-adenosyl-L-methionine-dependent formation of N(1)-methyladenine at position 58 (m1A58) in tRNA. The sequence is that of tRNA (adenine(58)-N(1))-methyltransferase TrmI (trmI) from Thermus thermophilus (strain ATCC 27634 / DSM 579 / HB8).